Here is a 235-residue protein sequence, read N- to C-terminus: MILLVSPIDVEEAKEAIAGGADIIDVKNPKEGSLGANFPWMIKAIREVTPKDLLVSATVGDVPYKPGTISLAAVGAAISGADYIKVGLYGVKNYYQAVELMKNVVRAVKDIDENKIVVAAGYADAYRVGAVEPLIVPKIARDAGCDVAMLDTAIKDGKTLFDFQSKEILAEFVDEAHSYGLKCALAGSIKKEHIPILKEIGTDIVGVRGAACKGGDRNNGRIDRELVKELKELCK.

Lysine 27 functions as the Schiff-base intermediate with substrate in the catalytic mechanism. Lysine 85 serves as the catalytic Proton acceptor.

The protein belongs to the MfnB family. As to quaternary structure, homohexamer. Trimer of dimers.

The catalysed reaction is 2 D-glyceraldehyde 3-phosphate = 4-(hydroxymethyl)-2-furancarboxaldehyde phosphate + phosphate + 2 H2O. Its pathway is cofactor biosynthesis; methanofuran biosynthesis. Its function is as follows. Catalyzes the formation of 4-(hydroxymethyl)-2-furancarboxaldehyde phosphate (4-HFC-P) from two molecules of glyceraldehyde-3-P (GA-3-P). This chain is (5-formylfuran-3-yl)methyl phosphate synthase, found in Methanocaldococcus jannaschii (strain ATCC 43067 / DSM 2661 / JAL-1 / JCM 10045 / NBRC 100440) (Methanococcus jannaschii).